The following is a 331-amino-acid chain: Cytosolic arginine sensor for mTORC1 subunit 1 (331 aa).

Residue serine 14 is modified to Phosphoserine. ACT domains lie at 72 to 137 and 259 to 320; these read AEAT…HTLA and GELW…DILQ. Residues 110 to 111, glycine 273, 279 to 280, and 299 to 303 contribute to the L-arginine site; these read SV, IV, and TFNFD.

It belongs to the GATS family. Forms homodimers and heterodimers with CASTOR2. Interacts with the GATOR2 complex which is composed of MIOS, SEC13, SEH1L, WDR24 and WDR59; the interaction is negatively regulated by arginine. Interacts with TM4SF5; the interaction is positively regulated by leucine and is negatively regulated by arginine. Phosphorylation at Ser-14 by AKT1, promoting the interaction between CASTOR1 and RNF167. Post-translationally, ubiquitinated by RNF167 via 'Lys-29'-polyubiquitination, leading to its degradation, releasing the GATOR2 complex. Ubiquitination by RNF167 is promoted by phosphorylation at Ser-14 by AKT1.

It is found in the cytoplasm. The protein resides in the cytosol. Its function is as follows. Functions as an intracellular arginine sensor within the amino acid-sensing branch of the TORC1 signaling pathway. As a homodimer or a heterodimer with CASTOR2, binds and inhibits the GATOR subcomplex GATOR2 and thereby mTORC1. Binding of arginine to CASTOR1 allosterically disrupts the interaction of CASTOR1-containing dimers with GATOR2 which can in turn activate mTORC1 and the TORC1 signaling pathway. The polypeptide is Cytosolic arginine sensor for mTORC1 subunit 1 (Mus musculus (Mouse)).